A 408-amino-acid chain; its full sequence is Imidazolonepropionase (408 aa).

Positions 73 and 75 each coordinate Fe(3+). Residues H73 and H75 each contribute to the Zn(2+) site. 4-imidazolone-5-propanoate contacts are provided by R82, Y145, and H178. Y145 contacts N-formimidoyl-L-glutamate. H243 contacts Fe(3+). H243 is a binding site for Zn(2+). Position 246 (Q246) interacts with 4-imidazolone-5-propanoate. Position 318 (D318) interacts with Fe(3+). A Zn(2+)-binding site is contributed by D318. 2 residues coordinate N-formimidoyl-L-glutamate: N320 and G322. Residue S323 participates in 4-imidazolone-5-propanoate binding.

The protein belongs to the metallo-dependent hydrolases superfamily. HutI family. Requires Zn(2+) as cofactor. It depends on Fe(3+) as a cofactor.

It is found in the cytoplasm. It catalyses the reaction 4-imidazolone-5-propanoate + H2O = N-formimidoyl-L-glutamate. The protein operates within amino-acid degradation; L-histidine degradation into L-glutamate; N-formimidoyl-L-glutamate from L-histidine: step 3/3. Its function is as follows. Catalyzes the hydrolytic cleavage of the carbon-nitrogen bond in imidazolone-5-propanoate to yield N-formimidoyl-L-glutamate. It is the third step in the universal histidine degradation pathway. The chain is Imidazolonepropionase from Shewanella oneidensis (strain ATCC 700550 / JCM 31522 / CIP 106686 / LMG 19005 / NCIMB 14063 / MR-1).